We begin with the raw amino-acid sequence, 480 residues long: 3-isopropylmalate dehydratase large subunit (480 aa).

[4Fe-4S] cluster contacts are provided by C360, C418, and C421.

Belongs to the aconitase/IPM isomerase family. LeuC type 1 subfamily. Heterodimer of LeuC and LeuD. [4Fe-4S] cluster is required as a cofactor.

It catalyses the reaction (2R,3S)-3-isopropylmalate = (2S)-2-isopropylmalate. It participates in amino-acid biosynthesis; L-leucine biosynthesis; L-leucine from 3-methyl-2-oxobutanoate: step 2/4. Its function is as follows. Catalyzes the isomerization between 2-isopropylmalate and 3-isopropylmalate, via the formation of 2-isopropylmaleate. This chain is 3-isopropylmalate dehydratase large subunit, found in Anaeromyxobacter dehalogenans (strain 2CP-1 / ATCC BAA-258).